The chain runs to 360 residues: DNA replication and repair protein RecF (360 aa).

Gly-30 to Thr-37 provides a ligand contact to ATP.

This sequence belongs to the RecF family.

It is found in the cytoplasm. The RecF protein is involved in DNA metabolism; it is required for DNA replication and normal SOS inducibility. RecF binds preferentially to single-stranded, linear DNA. It also seems to bind ATP. This is DNA replication and repair protein RecF from Acinetobacter baumannii (strain ATCC 17978 / DSM 105126 / CIP 53.77 / LMG 1025 / NCDC KC755 / 5377).